Consider the following 1175-residue polypeptide: MRLSKSQGILPLAHAVLAAAIAYSTAATAADYRLEAEDFTNVGGTYNDGQPQKISVYTVNGITAINYVNKGDYAEYTLSVPQAGQYDLTYFAGTAIDGARIDFQVNNNGSWQTLARTDVPNAGWDNFQPLPAGSIHLSSGSQQIRLFGGGDHDWQWNLDKMELAYIDDSSSSSGGGSTSSSSSGGSSSSSGSGSSSSGGSPEEGGHVSGTFKLEAESAHHVGGEIDTYAINGGVAVNYFNSGDYLEYNLHLDQSGLYRPKYYVSTAHSSGVAVGLMATDHEGALVTKNTSEVQSQGGWDSFYLLNAASDINLFSGDLTIRIYGAGTQDFQFNIDYVIFERISDVDLDLDGDSDGIADVNDSCPGTDPSETANSEGCAPSQLDTDKDGIADNRDQCPTTAPGDFVDSEGCASTGADDDDLDGIANQEDQCPDTPFGENVAPSGCTGFEDSDSDGIANGTDQCPSTPAKEFTNESGCSPSQVANPHSVKVTVNANIKHSVKGISDFGRNRHITAHTTIYEKDWEGHADKLNYLVNTLDVTLGRDNGTATWKFQDTKEDPNRENWPDLDYMVTRGKELRENYEANPFYKRFSADRTELIAGTNPHPTYPTLSWNANGSTWHDWQPMHIETSAAWMGQYLKHYYANSSNGYIGDPMPKFWEVINEPDMEMKTGKFMVTNQEAIWEYHNLVAQEIRSKLGNEAPLIGGMTWGQHDFYRRDGISRYADNAYDQWIVADDPAEEAAAEEFFRQAMATTVDDTRDQNWYQWDVMWKGFMDAAGHNMDFYSVHVYDWPGVNSDAKSTLRRNGHLPAMLDMIEWYDVYQNGQANRKPIVISEYGAVQGGWNTLAHQPRFESEVLKSFNAMLMQILERPDYVIKSMPFTPAKPLWGYYPGGCGYEEVRNCTAPYHYSLLIEPVLNSDNWQWSDYIKFYELWADIDGTRVDSVSSDPDVQVQSYVNNNELFIIINNLETVDTTIDLTVAGLNNAQLQNVELRNMHFDNNFDTQLERHHMKQMPTKVTLAADATLVLRYTLNSTIAINQSVDEKKYFGNSVSGGSVPHRISVAGGAKNLQVNNVSVPSGYAESQLRLTVALYPSQDDTPDSLLQIDTLTINGHTIETPIDWRGRKENSVERYFNTLEIPVPVDVLQKNNTISVDFRHNGELTVANLVIKEYTTTPVRH.

Residues 1 to 29 (MRLSKSQGILPLAHAVLAAAIAYSTAATA) form the signal peptide. In terms of domain architecture, CBM6 1 spans 32-164 (YRLEAEDFTN…QWNLDKMELA (133 aa)). The interval 169-208 (SSSSSGGGSTSSSSSGGSSSSSGSGSSSSGGSPEEGGHVS) is disordered. Residues 178–200 (TSSSSSGGSSSSSGSGSSSSGGS) show a composition bias toward low complexity. The 129-residue stretch at 211-339 (FKLEAESAHH…QFNIDYVIFE (129 aa)) folds into the CBM6 2 domain. The interval 355-481 (IADVNDSCPG…ESGCSPSQVA (127 aa)) is disordered. Residues 382-393 (DTDKDGIADNRD) are compositionally biased toward basic and acidic residues. Residues 471–481 (NESGCSPSQVA) show a composition bias toward polar residues. Residue Glu-661 is the Proton donor of the active site. Glu-832 acts as the Nucleophile in catalysis.

Belongs to the glycosyl hydrolase 86 family.

The enzyme catalyses Hydrolysis of (1-&gt;4)-beta-D-galactosidic linkages in agarose, giving the tetramer as the predominant product.. With respect to regulation, activity and stability are strongly enhanced by CaCl(2). Activity is not affected by sulfhydryl inhibitors such as iodoacetoamide and p-chloromercuribenzoate or by thiol reagents such as dithiothreitol and 2-mercaptoethanol. Strongly inhibited by N-bromosuccinimide and sodium dodecyl sulfate. Endo-type beta-agarase, which degrades agarose and agarose oligosaccharides more polymerized than hexamers to yield neoagarohexaose (NA6) as the main product, with lesser amounts of neoagarotetraose (NA4) and neoagarobiose (NA2). The sequence is that of Beta-agarase AgaO from Microbulbifer thermotolerans.